Reading from the N-terminus, the 462-residue chain is ATP synthase subunit beta (462 aa).

151–158 (GGAGVGKT) contributes to the ATP binding site.

It belongs to the ATPase alpha/beta chains family. F-type ATPases have 2 components, CF(1) - the catalytic core - and CF(0) - the membrane proton channel. CF(1) has five subunits: alpha(3), beta(3), gamma(1), delta(1), epsilon(1). CF(0) has four main subunits: a(1), b(1), b'(1) and c(9-12).

It localises to the cell inner membrane. The catalysed reaction is ATP + H2O + 4 H(+)(in) = ADP + phosphate + 5 H(+)(out). In terms of biological role, produces ATP from ADP in the presence of a proton gradient across the membrane. The catalytic sites are hosted primarily by the beta subunits. In Chlorobium phaeovibrioides (strain DSM 265 / 1930) (Prosthecochloris vibrioformis (strain DSM 265)), this protein is ATP synthase subunit beta.